Reading from the N-terminus, the 506-residue chain is Anaerobic nitric oxide reductase transcription regulator NorR (506 aa).

Residue D57 is modified to 4-aspartylphosphate. In terms of domain architecture, Sigma-54 factor interaction spans 187–416 (MIGLSPAMTQ…LEHAIHRAVV (230 aa)). ATP is bound by residues 215–222 (GETGTGKE) and 278–287 (ADNGTLFLDE). Residues 481–500 (WAASARALETDVANLHRLAK) constitute a DNA-binding region (H-T-H motif).

It participates in nitrogen metabolism; nitric oxide reduction. Required for the expression of anaerobic nitric oxide (NO) reductase, acts as a transcriptional activator for at least the norVW operon. Activation also requires sigma-54. This is Anaerobic nitric oxide reductase transcription regulator NorR from Salmonella dublin (strain CT_02021853).